A 523-amino-acid polypeptide reads, in one-letter code: Glutamate--cysteine ligase (523 aa).

It belongs to the glutamate--cysteine ligase type 1 family. Type 1 subfamily.

The enzyme catalyses L-cysteine + L-glutamate + ATP = gamma-L-glutamyl-L-cysteine + ADP + phosphate + H(+). It functions in the pathway sulfur metabolism; glutathione biosynthesis; glutathione from L-cysteine and L-glutamate: step 1/2. The chain is Glutamate--cysteine ligase from Baumannia cicadellinicola subsp. Homalodisca coagulata.